The following is a 149-amino-acid chain: UPF0179 protein TON_1048 (149 aa).

It belongs to the UPF0179 family.

The sequence is that of UPF0179 protein TON_1048 from Thermococcus onnurineus (strain NA1).